A 42-amino-acid polypeptide reads, in one-letter code: Cytochrome b6-f complex subunit 7 (42 aa).

The helical transmembrane segment at 15 to 35 (IVTAAVTCIFMVLFGLSLGFA) threads the bilayer.

The protein belongs to the PetM family. As to quaternary structure, the 4 large subunits of the cytochrome b6-f complex are cytochrome b6, subunit IV (17 kDa polypeptide, PetD), cytochrome f and the Rieske protein, while the 4 small subunits are PetG, PetL, PetM and PetN. The complex functions as a dimer.

It localises to the plastid. The protein localises to the chloroplast thylakoid membrane. Component of the cytochrome b6-f complex, which mediates electron transfer between photosystem II (PSII) and photosystem I (PSI), cyclic electron flow around PSI, and state transitions. This Trieres chinensis (Marine centric diatom) protein is Cytochrome b6-f complex subunit 7.